The following is a 442-amino-acid chain: F-box only protein 39 (442 aa).

The region spanning W16–I61 is the F-box domain.

Directly interacts with SKP1 and CUL1.

Functionally, substrate-recognition component of the SCF (SKP1-CUL1-F-box protein)-type E3 ubiquitin ligase complex. This is F-box only protein 39 (FBXO39) from Homo sapiens (Human).